Here is a 156-residue protein sequence, read N- to C-terminus: Ecotin (156 aa).

The N-terminal stretch at 1-19 is a signal peptide; it reads MKALLIAAGVAALSSTAMA. Cys-65 and Cys-102 are joined by a disulfide.

This sequence belongs to the protease inhibitor I11 (ecotin) family. As to quaternary structure, homodimer.

Its subcellular location is the periplasm. Functionally, general inhibitor of family S1 serine proteases. The sequence is that of Ecotin from Pseudomonas aeruginosa (strain ATCC 15692 / DSM 22644 / CIP 104116 / JCM 14847 / LMG 12228 / 1C / PRS 101 / PAO1).